Consider the following 335-residue polypeptide: O(6)-methylguanine-induced apoptosis 2 (335 aa).

Over residues 1 to 11 the composition is skewed to basic and acidic residues; sequence MDNSTQKDQHS. The interval 1-20 is disordered; sequence MDNSTQKDQHSGKKYSRKAN. 7 STPGR repeats span residues 68 to 75, 110 to 118, 149 to 156, 188 to 215, 226 to 255, 267 to 284, and 308 to 317; these read PGPGFYNV, PAANAYTIP, PAPNQYNA, GPAP…FKSK, GPGP…LNFS, LPGP…PRKH, and PGPATYRPEF. Y73 is subject to Phosphotyrosine.

This sequence belongs to the STPG1 family.

It localises to the cytoplasm. Its subcellular location is the nucleus. Its function is as follows. May positively contribute to the induction of apoptosis triggered by O(6)-methylguanine. The sequence is that of O(6)-methylguanine-induced apoptosis 2 (STPG1) from Bos taurus (Bovine).